The primary structure comprises 544 residues: MQNKPSFILRNPSANKGTGFNNEEREKLGLKGLLPPKVESLQEQSDRALSQFTSFNTNLERYIFLNCLRDRNETLFYYLLSNNLELMMPIIYTPTVGEACQKFGNEFRFAQGMYFASQDKGNIRAMMDNWPAEGVDIIVVSDGSRILGLGDLGTNGMGIPVGKLQLYVAGAGFCPTRTLPVIIDSGTNTKKYLEDKYYLGERHPRIPDSEYYPLVDEFLAAAFNKWPKVIVQFEDISNDHCFNLLDEYRNKYLCFNDDIQGTGSVILSGFINAVRSVQKPIKEHRMVFLGAGSAGIGVADCIMSLFDEAGVSKEEARKSFWFVDSKGLITTTRGDELTSQKKQYAREDYTYQLKSLLEVVRDVKPTAIIGLSGIGGSFSQEVIEEMAKHVEKPIVFALSNPTTNAECTAEQAYQWTDGRCIFASGSPFKPVEYKGKTFVPGQGNNMYIFPGLGLAASVCEAKHVTDAMIITAAKTLASFVEDSEVLTGKIYPGLQHIREISTRIAVKVIEKAYEEGMAQLPRPDNIEALVKSRQYVPSYDKSKN.

Residues 1-22 form a disordered region; that stretch reads MQNKPSFILRNPSANKGTGFNN. Polar residues predominate over residues 12–21; the sequence is PSANKGTGFN. Tyr92 serves as the catalytic Proton donor. An NAD(+)-binding site is contributed by Arg145. Lys163 functions as the Proton acceptor in the catalytic mechanism. A divalent metal cation contacts are provided by Glu234, Asp235, and Asp258. Residue Asp258 coordinates NAD(+). 287 to 303 contributes to the NADP(+) binding site; it reads VFLGAGSAGIGVADCIM. Asn400 is an NAD(+) binding site.

It belongs to the malic enzymes family. In terms of assembly, homotetramer. Mg(2+) serves as cofactor. Requires Mn(2+) as cofactor. Expressed in the fruiting body.

It localises to the cytoplasm. The enzyme catalyses (S)-malate + NADP(+) = pyruvate + CO2 + NADPH. It catalyses the reaction oxaloacetate + H(+) = pyruvate + CO2. This chain is NADP-dependent malic enzyme (malA), found in Dictyostelium discoideum (Social amoeba).